Here is a 185-residue protein sequence, read N- to C-terminus: uncharacterized protein (185 aa).

Component of the acid-insoluble and acid-soluble organic matrix of calcified layers of the shell (at protein level).

The protein resides in the secreted. This is an uncharacterized protein from Lottia gigantea (Giant owl limpet).